The chain runs to 2126 residues: MSDGTAEKQSGTPGFLSPPAPVPKNGSSSDSSVGEKLGAAVADSGIGRTEEYRRRRHTMDKDSRGAAATTTPTEHRFFRRSVICDSNATALELPGLPLSIPQPSVPAVVPQSAPPEPHREETLTATVASQVSQQPSAAASPGEQAVVGSATATVPSSTSKDRPVSQPSLVGSKEEPPPSRSGSGSGGASAKEPQEERNQQQDDIEELETKAVGMSNDGRFLKFDIEIGRGSFKTVYKGLDTETTVEVAWCELQDRKLTKSERQRFKEEAEMLKGLQHPNIVRFYDSWESTVKGKKCIVLVTELMTSGTLKTYLKRFKVMKIKVLRSWCRQILKGLQFLHTRTPPIIHRDLKCDNIFITGPTGSVKIGDLGLATLKRASFAKSVIGTPEFMAPEMYEEKYDESVDVYAFGMCMLEMATSEYPYSECQNAAQIYRRVTSGVKPASFDKVAIPEVKEIIEGCIRQNKDERYSIKDLLNHAFFQEETGVRVELAEEDDGEKIAIKLWLRIEDIKKLKGKYKDNEAIEFSFDLERDVPEDVAQEMVESGYVCEGDHKTMAKAIKDRVSLIKRKREQRQLVREEQEKRKQEESSFKQQNEQQASVSQAGIQPLSVASTGIPTAPTTSASVSTQVEPEEPEADQHQQLQYQQPSISVLSDGTVDSGQGSSVFTESRVSSQQTVSYGSQHEQAHSIGTAPGHTVSSIQAQSQPHGVYPPSSMAQGQNQGQPSSSLAGVLSSQPVQHPQQQGIQPTVPPQQAVQYSLPQAASSSEGTVQPVSQPQVSAGTQSSTQGVSQAAPPEQTPITQSQPTQPVPLVSSVDSAHSDVASGMSDGNENAPSSSGRHEGRTTKRHYRKSVRSRSRHEKTSRPKLRILNVSNKGDRVVECQLETHNRKMVTFKFDLDGDNPEEIATIMVNNDFILAIERESFVAQVREIIEKADEMLSEDVSVEPEGDQGLESLQGKDDYGFPGSQKLEGEFKQPIAVSSMPQQIGVPTSSLTQVVHSAGRRFIVSPVPESRLRESKIFTSEIPDPVAASTSQGPGMNLSHSASSLSLQQAFSELKHGQMTEGPNTAPPNFNHPGPTFSPFLTSIAGVQTVAASTPSVSVPITSSPLNDISTSVMQSEGALPTDKGIGGVTTSTGVVASGGLTTLSVSETPTLSSAVSSSTAPAVVTVSTTSQPVQASTSGSIASSTGSFPSGTFSTTTGTTVSSVAVPNAKPPTVLLQQVAGNTAGVAIVTSVSTTTPFPAMASQPSLPLGSSTSAPTLAETVVVSAHSLDKASHSSTAGLGLSFCAPSSSSSSGTAVSSSVSQPGIVHPLVISSAIASTPVLPQPAVPTSTPLLPQVPNIPPLVQPVANVPAVQQTLIHSQPQPALLPNQPHTHCPEMDADTQSKAPGIDDIKTLEEKLRSLFSEHSSSGTQHASVSLETPLVVETVTPGIPTTAVAPSKLMTSTTSTCLPPTNLPLGTAGMPVMPVGTPGQVSTPGTHASAPASTATGAKPGTTPPKPSLTKTVVPPVGTELSAGTVPCEQLPPFPGPSLIQTQQPLEDLDAQLRRTLSPETIPVTPAVGPLSTMSSTAVTEAGSQPQKDGTEVHVTASSSGAGVVKMGRFQVSVTMDDAQKERKNRSEDTKSVHFESSTSESSVLSSSSPESTLVKPEPNGITVSGISLDVPDSTHRTPTPEAKSETGQPTKVGRFQVTTTANKVGRFSVSRTEDKVTELKKEGPVTSPFRDSEQTVIPAAIPKKEKPELAEPSHLNGPSSDLEAAFLSRGGEDGSGSPHSPPHLCSKSLPIQTLSQSLSNSFNSSYMSSDNESDIEDEDLRLELRRLREKHLKEIQDLQSRQKHEIESLYTKLGKVPPAVIIPPAAPLSGRRRRPTKSKGSKSSRSSSLGNKSPQLSGNLSGQSGTSVLNPQQTLHPPGNTPETGHNQLLQPLKPSPSSDNLYSAFTSDGAISVPSLSAPGQGTSSTNTVGGTVSSQAAQAQPPAMTSSRKGTFTDDLHKLVDNWARDAMNLSGRRGSKGHMNYEGPGMARKFSAPGQLCISMTSNMGGSTPISAASATSLGHFTKSMCPPQQYGFPAAPFGTQWSGTGGPAPQPLGQFQPVGTTSLQNFNISNLQKSISNPPGSNLRTT.

2 disordered regions span residues 1 to 80 (MSDG…FFRR) and 93 to 202 (LPGL…QQQD). At serine 17 the chain carries Phosphoserine. Positions 48-64 (RTEEYRRRRHTMDKDSR) are enriched in basic and acidic residues. Threonine 58 bears the Phosphothreonine mark. Composition is skewed to low complexity over residues 101 to 111 (PQPSVPAVVPQ) and 127 to 141 (VASQVSQQPSAAASP). Residues serine 165 and serine 172 each carry the phosphoserine modification. Positions 221–479 (LKFDIEIGRG…IKDLLNHAFF (259 aa)) constitute a Protein kinase domain. ATP is bound at residue serine 231. Chloride is bound by residues phenylalanine 283 and leucine 299. ATP is bound by residues 301 to 304 (TELM) and lysine 351. The Proton acceptor role is filled by aspartate 368. The chloride site is built by leucine 369 and leucine 371. Phosphoserine; by autocatalysis occurs at positions 378 and 382. Residues 488–555 (ELAEEDDGEK…VCEGDHKTMA (68 aa)) form an autoinhibitory domain region. The span at 573–588 (QLVREEQEKRKQEESS) shows a compositional bias: basic and acidic residues. The disordered stretch occupies residues 573–865 (QLVREEQEKR…SRHEKTSRPK (293 aa)). Positions 593–614 (NEQQASVSQAGIQPLSVASTGI) are enriched in polar residues. Low complexity predominate over residues 615-626 (PTAPTTSASVST). The segment at 629–639 (EPEEPEADQHQ) is interaction with KLHL3. Polar residues-rich tracts occupy residues 638 to 682 (HQQL…GSQH), 695 to 705 (TVSSIQAQSQP), and 713 to 733 (SMAQGQNQGQPSSSLAGVLSS). A compositionally biased stretch (low complexity) spans 734 to 746 (QPVQHPQQQGIQP). Positions 750–789 (PQQAVQYSLPQAASSSEGTVQPVSQPQVSAGTQSSTQGVS) are enriched in polar residues. The segment covering 793–823 (PPEQTPITQSQPTQPVPLVSSVDSAHSDVAS) has biased composition (low complexity). Polar residues predominate over residues 826–836 (SDGNENAPSSS). The span at 844–865 (TKRHYRKSVRSRSRHEKTSRPK) shows a compositional bias: basic residues. The short motif at 1003–1006 (RFIV) is the RFXV motif 1 element. Position 1007 is a phosphoserine (serine 1007). 2 disordered regions span residues 1474–1507 (GQVSTPGTHASAPASTATGAKPGTTPPKPSLTKT) and 1557–1595 (IPVTPAVGPLSTMSSTAVTEAGSQPQKDGTEVHVTASSS). Residues 1477–1496 (STPGTHASAPASTATGAKPG) show a composition bias toward low complexity. Polar residues predominate over residues 1567-1583 (STMSSTAVTEAGSQPQK). The RFXV motif 2 signature appears at 1604–1607 (RFQV). The tract at residues 1610–1695 (TMDDAQKERK…TKVGRFQVTT (86 aa)) is disordered. Basic and acidic residues predominate over residues 1613 to 1629 (DAQKERKNRSEDTKSVH). Low complexity predominate over residues 1632-1650 (SSTSESSVLSSSSPESTLV). 2 consecutive short sequence motifs (RFXV motif) follow at residues 1690–1693 (RFQV) and 1702–1705 (RFSV). Positions 1709 to 1719 (EDKVTELKKEG) are enriched in basic and acidic residues. 3 disordered regions span residues 1709 to 1783 (EDKV…LCSK), 1856 to 1940 (VIIP…NLYS), and 1952 to 1990 (SLSAPGQGTSSTNTVGGTVSSQAAQAQPPAMTSSRKGTF). Residue serine 1723 is modified to Phosphoserine. A compositionally biased stretch (basic and acidic residues) spans 1738–1747 (PKKEKPELAE). A phosphoserine mark is found at serine 1755, serine 1756, serine 1771, serine 1773, serine 1776, and serine 1865. The span at 1866–1878 (GRRRRPTKSKGSK) shows a compositional bias: basic residues. The segment covering 1879–1889 (SSRSSSLGNKS) has biased composition (low complexity). The span at 1890-1940 (PQLSGNLSGQSGTSVLNPQQTLHPPGNTPETGHNQLLQPLKPSPSSDNLYS) shows a compositional bias: polar residues. Over residues 1957–1981 (GQGTSSTNTVGGTVSSQAAQAQPPA) the composition is skewed to low complexity. An amphipathic alpha-helix region spans residues 1985–2005 (SRKGTFTDDLHKLVDNWARDA). Phosphoserine is present on residues serine 2014 and serine 2030. Positions 2076-2097 (PFGTQWSGTGGPAPQPLGQFQP) are disordered. A phosphoserine mark is found at serine 2114 and serine 2116.

This sequence belongs to the protein kinase superfamily. Ser/Thr protein kinase family. WNK subfamily. Interacts with WNK3. Interacts with WNK4; inhibiting the activity of WNK4. Interacts with SGK1; promoting its activation. Associates with the mTORC2 complex. Interacts with UVRAG. Interacts (via amphipathic alpha-helix region) with EMC2; promoting the ER membrane protein complex assembly. In terms of assembly, interacts with isoform 1; inhibiting isoform 1 activity. Requires Mg(2+) as cofactor. Post-translationally, autophosphorylated at Ser-378 and Ser-382, promoting its activity. Autophosphorylation at Ser-382 is inhibited by intracellular calcium. Phosphorylation at Thr-58 increases ability to activate SGK1. In terms of processing, ubiquitinated by the BCR(KLHL3) complex, leading to its degradation. Also ubiquitinated by the BCR(KLHL2) complex. May be O-glycosylated.

The protein localises to the cytoplasm. It is found in the nucleus. Its subcellular location is the cytoskeleton. The protein resides in the spindle. The enzyme catalyses L-seryl-[protein] + ATP = O-phospho-L-seryl-[protein] + ADP + H(+). It carries out the reaction L-threonyl-[protein] + ATP = O-phospho-L-threonyl-[protein] + ADP + H(+). Activated in response to hyperosmotic stress: cell shrinkage promotes formation of a membraneless compartment that concentrates WNK1 with its substrates, OXSR1/OSR1 and STK39/SPAK. Activation requires autophosphorylation of Ser-382 and, to a lower extent, Ser-378. Autophosphorylation and subsequent activation is inhibited by increases in intracellular ionic strength: Cl(-) potently inhibits WNK1 kinase activity via direct binding. Also inhibited by K(+) ions. Inhibited by Compound 12 ((5-Chloro-2-(2-((methyl-d3)amino)thiazol-4-yl)- pyridin-4-yl)(4-(4-chlorobenzyl)piperazin-1-yl)methanone). Serine/threonine-protein kinase component of the WNK1-SPAK/OSR1 kinase cascade, which acts as a key regulator of blood pressure and regulatory volume increase by promoting ion influx. WNK1 mediates regulatory volume increase in response to hyperosmotic stress by acting as a molecular crowding sensor, which senses cell shrinkage and mediates formation of a membraneless compartment by undergoing liquid-liquid phase separation. The membraneless compartment concentrates WNK1 with its substrates, OXSR1/OSR1 and STK39/SPAK, promoting WNK1-dependent phosphorylation and activation of downstream kinases OXSR1/OSR1 and STK39/SPAK. Following activation, OXSR1/OSR1 and STK39/SPAK catalyze phosphorylation of ion cotransporters SLC12A1/NKCC2, SLC12A2/NKCC1, SLC12A5/KCC2 and SLC12A6/KCC3, regulating their activity. Phosphorylation of Na-K-Cl cotransporters SLC12A2/NKCC1 and SLC12A2/NKCC1 promote their activation and ion influx; simultaneously, phosphorylation of K-Cl cotransporters SLC12A5/KCC2 and SLC12A6/KCC3 inhibit their activity, blocking ion efflux. Also acts as a regulator of angiogenesis in endothelial cells. Also acts independently of the WNK1-SPAK/OSR1 kinase cascade by catalyzing phosphorylation of other substrates, such as SYT2, PCF11 and NEDD4L. Mediates phosphorylation of SYT2, regulating SYT2 association with phospholipids and membrane-binding. Regulates mRNA export in the nucleus by mediating phosphorylation of PCF11, thereby decreasing the association between PCF11 and POLR2A/RNA polymerase II and promoting mRNA export to the cytoplasm. Acts as a negative regulator of autophagy. Required for the abscission step during mitosis, independently of the WNK1-SPAK/OSR1 kinase cascade. WNK1 may also play a role in actin cytoskeletal reorganization. Also acts as a scaffold protein independently of its protein kinase activity: negatively regulates cell membrane localization of various transporters and channels, such as SLC4A4, SLC26A6, SLC26A9, TRPV4 and CFTR. Involved in the regulation of epithelial Na(+) channel (ENaC) by promoting activation of SGK1 in a kinase-independent manner. Probably activates SGK1 by acting as a scaffold protein that promotes the recruitment of SGK1 to the mTORC2 complex in response to chloride, leading to mTORC2-dependent phosphorylation and activation of SGK1. Acts as an assembly factor for the ER membrane protein complex independently of its protein kinase activity: associates with EMC2 in the cytoplasm via its amphipathic alpha-helix, and prevents EMC2 ubiquitination and subsequent degradation, thereby promoting EMC2 stabilization. Functionally, kinase-defective isoform specifically expressed in kidney, which acts as a dominant-negative regulator of the longer isoform 1. Does not directly inhibit WNK4 and has no direct effect on sodium and chloride ion transport. Down-regulates sodium-chloride cotransporter activity indirectly by inhibiting isoform 1, it associates with isoform 1 and attenuates its kinase activity. In kidney, may play an important role regulating sodium and potassium balance. In terms of biological role, kinase-defective isoform produced by alternative promoter usage and alternative splicing. This is Serine/threonine-protein kinase WNK1 from Rattus norvegicus (Rat).